The following is a 98-amino-acid chain: MTAIYLNLTMAFSLALMGVLVYRSHLMSTLLCLEGMMLSLFILMTLLITHYRMSSISMLPLTLLVFSACEAAIGLALLVKMFTSYGNDHVQNLNLLKC.

3 helical membrane-spanning segments follow: residues 1–21 (MTAI…GVLV), 29–49 (TLLC…LLIT), and 59–79 (LPLT…ALLV).

The protein belongs to the complex I subunit 4L family. In terms of assembly, core subunit of respiratory chain NADH dehydrogenase (Complex I) which is composed of 45 different subunits.

The protein resides in the mitochondrion inner membrane. The catalysed reaction is a ubiquinone + NADH + 5 H(+)(in) = a ubiquinol + NAD(+) + 4 H(+)(out). In terms of biological role, core subunit of the mitochondrial membrane respiratory chain NADH dehydrogenase (Complex I) which catalyzes electron transfer from NADH through the respiratory chain, using ubiquinone as an electron acceptor. Part of the enzyme membrane arm which is embedded in the lipid bilayer and involved in proton translocation. The sequence is that of NADH-ubiquinone oxidoreductase chain 4L (MT-ND4L) from Notoryctes typhlops (Southern marsupial mole).